A 331-amino-acid chain; its full sequence is DNA-directed RNA polymerase subunit alpha (331 aa).

Residues 1 to 223 (MDQKRPQLKA…DELTVFGNVE (223 aa)) form an alpha N-terminal domain (alpha-NTD) region. The tract at residues 260–331 (PYPADLDTPR…LAQFGLALRD (72 aa)) is alpha C-terminal domain (alpha-CTD).

It belongs to the RNA polymerase alpha chain family. In terms of assembly, homodimer. The RNAP catalytic core consists of 2 alpha, 1 beta, 1 beta' and 1 omega subunit. When a sigma factor is associated with the core the holoenzyme is formed, which can initiate transcription.

The enzyme catalyses RNA(n) + a ribonucleoside 5'-triphosphate = RNA(n+1) + diphosphate. Functionally, DNA-dependent RNA polymerase catalyzes the transcription of DNA into RNA using the four ribonucleoside triphosphates as substrates. The chain is DNA-directed RNA polymerase subunit alpha from Deinococcus geothermalis (strain DSM 11300 / CIP 105573 / AG-3a).